The sequence spans 176 residues: 3-hydroxydecanoyl-[acyl-carrier-protein] dehydratase (176 aa).

Residue His70 is part of the active site.

It belongs to the thioester dehydratase family. FabA subfamily. As to quaternary structure, homodimer.

It localises to the cytoplasm. It carries out the reaction a (3R)-hydroxyacyl-[ACP] = a (2E)-enoyl-[ACP] + H2O. It catalyses the reaction (3R)-hydroxydecanoyl-[ACP] = (2E)-decenoyl-[ACP] + H2O. The enzyme catalyses (2E)-decenoyl-[ACP] = (3Z)-decenoyl-[ACP]. The protein operates within lipid metabolism; fatty acid biosynthesis. Functionally, necessary for the introduction of cis unsaturation into fatty acids. Catalyzes the dehydration of (3R)-3-hydroxydecanoyl-ACP to E-(2)-decenoyl-ACP and then its isomerization to Z-(3)-decenoyl-ACP. Can catalyze the dehydratase reaction for beta-hydroxyacyl-ACPs with saturated chain lengths up to 16:0, being most active on intermediate chain length. This chain is 3-hydroxydecanoyl-[acyl-carrier-protein] dehydratase, found in Alkalilimnicola ehrlichii (strain ATCC BAA-1101 / DSM 17681 / MLHE-1).